We begin with the raw amino-acid sequence, 608 residues long: Dihydroxy-acid dehydratase, chloroplastic (608 aa).

The transit peptide at 1–34 directs the protein to the chloroplast; sequence MQATIFSPRATLFPCKPLLPSHNVNSRRPSIISC. N-acetylserine is present on Ser35. Cys100 provides a ligand contact to [2Fe-2S] cluster. Asp132 is a binding site for Mg(2+). Residue Cys173 participates in [2Fe-2S] cluster binding. Mg(2+) is bound at residue Asp174. Position 245 (Cys245) interacts with [2Fe-2S] cluster. Residue Glu497 participates in Mg(2+) binding. The Proton acceptor role is filled by Ser523.

It belongs to the IlvD/Edd family. The cofactor is [2Fe-2S] cluster. Mg(2+) serves as cofactor.

The protein resides in the plastid. It localises to the chloroplast. It carries out the reaction (2R)-2,3-dihydroxy-3-methylbutanoate = 3-methyl-2-oxobutanoate + H2O. The catalysed reaction is (2R,3R)-2,3-dihydroxy-3-methylpentanoate = (S)-3-methyl-2-oxopentanoate + H2O. It participates in amino-acid biosynthesis; L-isoleucine biosynthesis; L-isoleucine from 2-oxobutanoate: step 3/4. The protein operates within amino-acid biosynthesis; L-valine biosynthesis; L-valine from pyruvate: step 3/4. With respect to regulation, is highly competitively inhibited by the fungal sesquiterpenoid aspterric acid, which is effective as a herbicide in spray applications. Functions in the biosynthesis of branched-chain amino acids. Catalyzes the dehydration of (2R,3R)-2,3-dihydroxy-3-methylpentanoate (2,3-dihydroxy-3-methylvalerate) into 2-oxo-3-methylpentanoate (2-oxo-3-methylvalerate) and of (2R)-2,3-dihydroxy-3-methylbutanoate (2,3-dihydroxyisovalerate) into 2-oxo-3-methylbutanoate (2-oxoisovalerate), the penultimate precursor to L-isoleucine and L-valine, respectively. This Arabidopsis thaliana (Mouse-ear cress) protein is Dihydroxy-acid dehydratase, chloroplastic.